A 547-amino-acid chain; its full sequence is Chaperonin GroEL (547 aa).

ATP-binding positions include 29–32 (TLGP), 86–90 (DGTTT), Gly-413, and Asp-498.

It belongs to the chaperonin (HSP60) family. As to quaternary structure, forms a cylinder of 14 subunits composed of two heptameric rings stacked back-to-back. Interacts with the co-chaperonin GroES.

It is found in the cytoplasm. It carries out the reaction ATP + H2O + a folded polypeptide = ADP + phosphate + an unfolded polypeptide.. Together with its co-chaperonin GroES, plays an essential role in assisting protein folding. The GroEL-GroES system forms a nano-cage that allows encapsulation of the non-native substrate proteins and provides a physical environment optimized to promote and accelerate protein folding. This Herpetosiphon aurantiacus (strain ATCC 23779 / DSM 785 / 114-95) protein is Chaperonin GroEL.